Consider the following 256-residue polypeptide: Thiazole synthase (256 aa).

K95 serves as the catalytic Schiff-base intermediate with DXP. 1-deoxy-D-xylulose 5-phosphate is bound by residues G156, 182 to 183 (AG), and 204 to 205 (NT).

It belongs to the ThiG family. Homotetramer. Forms heterodimers with either ThiH or ThiS.

Its subcellular location is the cytoplasm. The enzyme catalyses [ThiS sulfur-carrier protein]-C-terminal-Gly-aminoethanethioate + 2-iminoacetate + 1-deoxy-D-xylulose 5-phosphate = [ThiS sulfur-carrier protein]-C-terminal Gly-Gly + 2-[(2R,5Z)-2-carboxy-4-methylthiazol-5(2H)-ylidene]ethyl phosphate + 2 H2O + H(+). Its pathway is cofactor biosynthesis; thiamine diphosphate biosynthesis. In terms of biological role, catalyzes the rearrangement of 1-deoxy-D-xylulose 5-phosphate (DXP) to produce the thiazole phosphate moiety of thiamine. Sulfur is provided by the thiocarboxylate moiety of the carrier protein ThiS. In vitro, sulfur can be provided by H(2)S. This Salmonella enteritidis PT4 (strain P125109) protein is Thiazole synthase.